The primary structure comprises 119 residues: Large ribosomal subunit protein uL18 (119 aa).

Belongs to the universal ribosomal protein uL18 family. Part of the 50S ribosomal subunit; part of the 5S rRNA/L5/L18/L25 subcomplex. Contacts the 5S and 23S rRNAs.

Its function is as follows. This is one of the proteins that bind and probably mediate the attachment of the 5S RNA into the large ribosomal subunit, where it forms part of the central protuberance. The protein is Large ribosomal subunit protein uL18 of Borrelia recurrentis (strain A1).